The following is a 206-amino-acid chain: Fibroblast growth factor 4 (206 aa).

The N-terminal stretch at 1–29 (MAGPGTAAAALLPAVLLAVLAPWAGRGGA) is a signal peptide.

It belongs to the heparin-binding growth factors family. In terms of assembly, interacts with FGFR1, FGFR2, FGFR3 and FGFR4. Affinity between fibroblast growth factors (FGFs) and their receptors is increased by heparan sulfate glycosaminoglycans that function as coreceptors.

It localises to the secreted. Functionally, plays an important role in the regulation of embryonic development, cell proliferation, and cell differentiation. Required for normal limb and cardiac valve development during embryogenesis. May play a role in embryonic molar tooth bud development via inducing the expression of MSX1, MSX2 and MSX1-mediated expression of SDC1 in dental mesenchyme cells. This chain is Fibroblast growth factor 4, found in Bos taurus (Bovine).